The sequence spans 199 residues: NAD(P)H dehydrogenase (quinone) (199 aa).

The Flavodoxin-like domain occupies 4–190; that stretch reads ILVLYYSMYG…KIARYQGEHV (187 aa). FMN is bound by residues 10-15 and 79-81; these read SMYGHI and TRF. Tyrosine 12 contributes to the NAD(+) binding site. Tryptophan 99 provides a ligand contact to substrate. Histidine 134 lines the FMN pocket.

Belongs to the WrbA family. The cofactor is FMN.

It carries out the reaction a quinone + NADH + H(+) = a quinol + NAD(+). The catalysed reaction is a quinone + NADPH + H(+) = a quinol + NADP(+). This chain is NAD(P)H dehydrogenase (quinone), found in Photorhabdus laumondii subsp. laumondii (strain DSM 15139 / CIP 105565 / TT01) (Photorhabdus luminescens subsp. laumondii).